The primary structure comprises 530 residues: Glutamate--tRNA ligase (530 aa).

Residues 26–36 (PSPTGKAHIGT) carry the 'HIGH' region motif. Residues 267–271 (KLSKR) carry the 'KMSKS' region motif. Lys-270 serves as a coordination point for ATP.

It belongs to the class-I aminoacyl-tRNA synthetase family. Glutamate--tRNA ligase type 1 subfamily. In terms of assembly, monomer.

It localises to the cytoplasm. The catalysed reaction is tRNA(Glu) + L-glutamate + ATP = L-glutamyl-tRNA(Glu) + AMP + diphosphate. Catalyzes the attachment of glutamate to tRNA(Glu) in a two-step reaction: glutamate is first activated by ATP to form Glu-AMP and then transferred to the acceptor end of tRNA(Glu). This is Glutamate--tRNA ligase from Gloeobacter violaceus (strain ATCC 29082 / PCC 7421).